The following is a 141-amino-acid chain: Hemoglobin subunit alpha (141 aa).

Positions 1–141 constitute a Globin domain; the sequence is VLSPADKTNL…VSTVLTSKYR (141 aa). Position 3 is a phosphoserine (Ser3). N6-succinyllysine is present on Lys7. Thr8 is modified (phosphothreonine). Residue Lys11 is modified to N6-succinyllysine. Lys16 carries the N6-acetyllysine; alternate modification. Lys16 is modified (N6-succinyllysine; alternate). Tyr24 is subject to Phosphotyrosine. Residue Lys40 is modified to N6-succinyllysine. Phosphoserine is present on Ser49. Residue His58 participates in O2 binding. His87 is a binding site for heme b. Residue Ser102 is modified to Phosphoserine. Thr108 carries the phosphothreonine modification. The residue at position 124 (Ser124) is a Phosphoserine. Residues Thr134 and Thr137 each carry the phosphothreonine modification. Ser138 bears the Phosphoserine mark.

The protein belongs to the globin family. In terms of assembly, heterotetramer of two alpha chains and two beta chains. Red blood cells.

In terms of biological role, involved in oxygen transport from the lung to the various peripheral tissues. The polypeptide is Hemoglobin subunit alpha (Tamias striatus (Eastern chipmunk)).